The chain runs to 467 residues: ATP synthase subunit beta (467 aa).

150-157 (GGAGVGKT) is a binding site for ATP.

Belongs to the ATPase alpha/beta chains family. In terms of assembly, F-type ATPases have 2 components, CF(1) - the catalytic core - and CF(0) - the membrane proton channel. CF(1) has five subunits: alpha(3), beta(3), gamma(1), delta(1), epsilon(1). CF(0) has three main subunits: a(1), b(2) and c(9-12). The alpha and beta chains form an alternating ring which encloses part of the gamma chain. CF(1) is attached to CF(0) by a central stalk formed by the gamma and epsilon chains, while a peripheral stalk is formed by the delta and b chains.

The protein resides in the cell inner membrane. The enzyme catalyses ATP + H2O + 4 H(+)(in) = ADP + phosphate + 5 H(+)(out). Functionally, produces ATP from ADP in the presence of a proton gradient across the membrane. The catalytic sites are hosted primarily by the beta subunits. In Aliivibrio fischeri (strain MJ11) (Vibrio fischeri), this protein is ATP synthase subunit beta.